The primary structure comprises 203 residues: Xrcc4-like factor 1 (203 aa).

It belongs to the XRCC4-XLF family. XLF subfamily.

The protein resides in the nucleus. In terms of biological role, involved in double-strand break repair via non-homologous end joining (NHEJ); the repair of a double-strand break in DNA in which the two broken ends are rejoined with little or no sequence complementarity. Has a role in meiosis. The polypeptide is Xrcc4-like factor 1 (xlf1) (Schizosaccharomyces pombe (strain 972 / ATCC 24843) (Fission yeast)).